The following is a 1014-amino-acid chain: EMILIN-1-A (1014 aa).

The signal sequence occupies residues 1–27 (MALYFVYLSTLLALILLGDNWAAGTYA). In terms of domain architecture, EMI spans 53 to 128 (HRNWCAYVVT…HGYSGDDCSD (76 aa)). 3 disulfide bridges follow: cysteine 57/cysteine 118, cysteine 84/cysteine 89, and cysteine 117/cysteine 126. Disordered stretches follow at residues 125 to 150 (DCSDGSSAIHDSRARPTGEEGRSDSD) and 811 to 869 (QDFT…ANVP). Residues 134–150 (HDSRARPTGEEGRSDSD) show a composition bias toward basic and acidic residues. Residues 145 to 179 (GRSDSDRIRQLEEQIQSLNKNLHNLQKKIYEESQR) adopt a coiled-coil conformation. Positions 815–865 (GPPGLPGPQGEKGSKGPPGPRGPLGKEGPQGRVGPVGPPGLRGEQGPPGKD) constitute a Collagen-like domain. Residues 840–856 (KEGPQGRVGPVGPPGLR) are compositionally biased toward low complexity. The C1q domain maps to 866 to 1012 (ANVPRLSFSA…GMLLYEESED (147 aa)).

It localises to the secreted. Its subcellular location is the extracellular space. It is found in the extracellular matrix. May be responsible for anchoring smooth muscle cells to elastic fibers, and may be involved not only in the formation of the elastic fiber, but also in the processes that regulate vessel assembly. Has cell adhesive capacity. In Danio rerio (Zebrafish), this protein is EMILIN-1-A.